Here is a 60-residue protein sequence, read N- to C-terminus: IIFVVGGPGSGKGTQCEKYGYTHLSTGDLLRVDSSNGFLIDGYPRQGEEFERKRLETYYK.

ATP is bound at residue 9-14 (GSGKGT). Ser25 is modified (phosphoserine). Residues 25-53 (STGDLLRVDSSNGFLIDGYPRQGEEFERK) are NMP. 2 residues coordinate AMP: Thr26 and Arg31.

This sequence belongs to the adenylate kinase family. AK1 subfamily. In terms of assembly, monomer. Mg(2+) is required as a cofactor.

Its subcellular location is the cytoplasm. The enzyme catalyses a ribonucleoside 5'-phosphate + ATP = a ribonucleoside 5'-diphosphate + ADP. It catalyses the reaction AMP + ATP = 2 ADP. The catalysed reaction is dAMP + ATP = dADP + ADP. It carries out the reaction dATP + AMP = dADP + ADP. The enzyme catalyses dAMP + dATP = 2 dADP. It catalyses the reaction a 2'-deoxyribonucleoside 5'-diphosphate + ATP = a 2'-deoxyribonucleoside 5'-triphosphate + ADP. The catalysed reaction is a ribonucleoside 5'-diphosphate + ATP = a ribonucleoside 5'-triphosphate + ADP. It carries out the reaction CDP + GTP = CTP + GDP. The enzyme catalyses GDP + ATP = GTP + ADP. It catalyses the reaction UDP + ATP = UTP + ADP. The catalysed reaction is GTP + UDP = UTP + GDP. It carries out the reaction dTDP + GTP = dTTP + GDP. The enzyme catalyses dCDP + GTP = dCTP + GDP. It catalyses the reaction dGDP + ATP = dGTP + ADP. The catalysed reaction is dADP + GTP = dATP + GDP. It carries out the reaction thiamine diphosphate + ADP = thiamine triphosphate + AMP. In terms of biological role, catalyzes the reversible transfer of the terminal phosphate group between ATP and AMP. Also displays broad nucleoside diphosphate kinase activity. Plays an important role in cellular energy homeostasis and in adenine nucleotide metabolism. Also catalyzes at a very low rate the synthesis of thiamine triphosphate (ThTP) from thiamine diphosphate (ThDP) and ADP. This Mesocricetus auratus (Golden hamster) protein is Adenylate kinase isoenzyme 1 (Ak1).